A 121-amino-acid polypeptide reads, in one-letter code: Small ribosomal subunit protein bS6 (121 aa).

The tract at residues 102 to 121 (MMRNVEREEARKAQQQEYAA) is disordered. Residues 105–115 (NVEREEARKAQ) show a composition bias toward basic and acidic residues.

This sequence belongs to the bacterial ribosomal protein bS6 family.

In terms of biological role, binds together with bS18 to 16S ribosomal RNA. This Polaromonas sp. (strain JS666 / ATCC BAA-500) protein is Small ribosomal subunit protein bS6.